A 508-amino-acid polypeptide reads, in one-letter code: Phenylalanine--tRNA ligase alpha subunit (508 aa).

Ala2 bears the N-acetylalanine mark. Thr190 carries the post-translational modification Phosphothreonine. A phosphoserine mark is found at Ser193 and Ser301. Lys311 is subject to N6-acetyllysine. Residues Thr329, 372-374, and Tyr412 each bind L-phenylalanine; that span reads QIE. A Mg(2+)-binding site is contributed by Glu414. Phe438 is an L-phenylalanine binding site.

It belongs to the class-II aminoacyl-tRNA synthetase family. Phe-tRNA synthetase alpha subunit type 2 subfamily. As to quaternary structure, heterotetramer; dimer of two heterodimers formed by FARSA and FARSB.

The protein resides in the cytoplasm. The enzyme catalyses tRNA(Phe) + L-phenylalanine + ATP = L-phenylalanyl-tRNA(Phe) + AMP + diphosphate + H(+). This Homo sapiens (Human) protein is Phenylalanine--tRNA ligase alpha subunit (FARSA).